We begin with the raw amino-acid sequence, 380 residues long: Glucose-1-phosphate adenylyltransferase (380 aa).

Alpha-D-glucose 1-phosphate is bound by residues Y99, G164, 179–180, and S190; that span reads EK.

The protein belongs to the bacterial/plant glucose-1-phosphate adenylyltransferase family. As to quaternary structure, homotetramer.

The catalysed reaction is alpha-D-glucose 1-phosphate + ATP + H(+) = ADP-alpha-D-glucose + diphosphate. The protein operates within glycan biosynthesis; glycogen biosynthesis. Functionally, involved in the biosynthesis of ADP-glucose, a building block required for the elongation reactions to produce glycogen. Catalyzes the reaction between ATP and alpha-D-glucose 1-phosphate (G1P) to produce pyrophosphate and ADP-Glc. In Bacillus subtilis (strain 168), this protein is Glucose-1-phosphate adenylyltransferase.